The primary structure comprises 168 residues: ATP synthase subunit b (168 aa).

A helical membrane pass occupies residues 9–29 (SIPFGTIAYTLFIFLLLLVML).

This sequence belongs to the ATPase B chain family. F-type ATPases have 2 components, F(1) - the catalytic core - and F(0) - the membrane proton channel. F(1) has five subunits: alpha(3), beta(3), gamma(1), delta(1), epsilon(1). F(0) has three main subunits: a(1), b(2) and c(10-14). The alpha and beta chains form an alternating ring which encloses part of the gamma chain. F(1) is attached to F(0) by a central stalk formed by the gamma and epsilon chains, while a peripheral stalk is formed by the delta and b chains.

The protein resides in the cell membrane. In terms of biological role, f(1)F(0) ATP synthase produces ATP from ADP in the presence of a proton or sodium gradient. F-type ATPases consist of two structural domains, F(1) containing the extramembraneous catalytic core and F(0) containing the membrane proton channel, linked together by a central stalk and a peripheral stalk. During catalysis, ATP synthesis in the catalytic domain of F(1) is coupled via a rotary mechanism of the central stalk subunits to proton translocation. Its function is as follows. Component of the F(0) channel, it forms part of the peripheral stalk, linking F(1) to F(0). In Bacillus cereus (strain B4264), this protein is ATP synthase subunit b.